Reading from the N-terminus, the 188-residue chain is Nicotinamide-nucleotide adenylyltransferase (188 aa).

This sequence belongs to the archaeal NMN adenylyltransferase family.

It localises to the cytoplasm. The catalysed reaction is beta-nicotinamide D-ribonucleotide + ATP + H(+) = diphosphate + NAD(+). The protein operates within cofactor biosynthesis; NAD(+) biosynthesis; NAD(+) from nicotinamide D-ribonucleotide: step 1/1. In Thermococcus kodakarensis (strain ATCC BAA-918 / JCM 12380 / KOD1) (Pyrococcus kodakaraensis (strain KOD1)), this protein is Nicotinamide-nucleotide adenylyltransferase.